The sequence spans 524 residues: Probable malate:quinone oxidoreductase (524 aa).

The protein belongs to the MQO family. FAD is required as a cofactor.

The enzyme catalyses (S)-malate + a quinone = a quinol + oxaloacetate. It participates in carbohydrate metabolism; tricarboxylic acid cycle; oxaloacetate from (S)-malate (quinone route): step 1/1. In Blochmanniella floridana, this protein is Probable malate:quinone oxidoreductase.